We begin with the raw amino-acid sequence, 466 residues long: Fumarate hydratase class II (466 aa).

Substrate is bound by residues 99 to 101 (SGT), 129 to 132 (HPND), 139 to 141 (SSN), and Thr187. The Proton donor/acceptor role is filled by His188. Residue Ser318 is part of the active site. Substrate is bound by residues Ser319 and 324-326 (KVN).

This sequence belongs to the class-II fumarase/aspartase family. Fumarase subfamily. As to quaternary structure, homotetramer.

It localises to the cytoplasm. The enzyme catalyses (S)-malate = fumarate + H2O. It functions in the pathway carbohydrate metabolism; tricarboxylic acid cycle; (S)-malate from fumarate: step 1/1. Involved in the TCA cycle. Catalyzes the stereospecific interconversion of fumarate to L-malate. This Thermus thermophilus (strain ATCC BAA-163 / DSM 7039 / HB27) protein is Fumarate hydratase class II.